We begin with the raw amino-acid sequence, 196 residues long: dTTP/UTP pyrophosphatase (196 aa).

Catalysis depends on D77, which acts as the Proton acceptor.

This sequence belongs to the Maf family. YhdE subfamily. A divalent metal cation serves as cofactor.

It localises to the cytoplasm. The catalysed reaction is dTTP + H2O = dTMP + diphosphate + H(+). It carries out the reaction UTP + H2O = UMP + diphosphate + H(+). In terms of biological role, nucleoside triphosphate pyrophosphatase that hydrolyzes dTTP and UTP. May have a dual role in cell division arrest and in preventing the incorporation of modified nucleotides into cellular nucleic acids. In Christiangramia forsetii (strain DSM 17595 / CGMCC 1.15422 / KT0803) (Gramella forsetii), this protein is dTTP/UTP pyrophosphatase.